A 170-amino-acid chain; its full sequence is ATP synthase subunit b (170 aa).

The helical transmembrane segment at 15–37 (FNLFETNILNWAVVVFGLYKFLP) threads the bilayer.

The protein belongs to the ATPase B chain family. F-type ATPases have 2 components, F(1) - the catalytic core - and F(0) - the membrane proton channel. F(1) has five subunits: alpha(3), beta(3), gamma(1), delta(1), epsilon(1). F(0) has four main subunits: a(1), b(1), b'(1) and c(10-14). The alpha and beta chains form an alternating ring which encloses part of the gamma chain. F(1) is attached to F(0) by a central stalk formed by the gamma and epsilon chains, while a peripheral stalk is formed by the delta, b and b' chains.

Its subcellular location is the cellular thylakoid membrane. F(1)F(0) ATP synthase produces ATP from ADP in the presence of a proton or sodium gradient. F-type ATPases consist of two structural domains, F(1) containing the extramembraneous catalytic core and F(0) containing the membrane proton channel, linked together by a central stalk and a peripheral stalk. During catalysis, ATP synthesis in the catalytic domain of F(1) is coupled via a rotary mechanism of the central stalk subunits to proton translocation. Functionally, component of the F(0) channel, it forms part of the peripheral stalk, linking F(1) to F(0). This is ATP synthase subunit b from Prochlorococcus marinus (strain MIT 9312).